We begin with the raw amino-acid sequence, 419 residues long: Gamma-glutamyl phosphate reductase (419 aa).

Belongs to the gamma-glutamyl phosphate reductase family.

It is found in the cytoplasm. The catalysed reaction is L-glutamate 5-semialdehyde + phosphate + NADP(+) = L-glutamyl 5-phosphate + NADPH + H(+). It functions in the pathway amino-acid biosynthesis; L-proline biosynthesis; L-glutamate 5-semialdehyde from L-glutamate: step 2/2. Catalyzes the NADPH-dependent reduction of L-glutamate 5-phosphate into L-glutamate 5-semialdehyde and phosphate. The product spontaneously undergoes cyclization to form 1-pyrroline-5-carboxylate. In Gloeobacter violaceus (strain ATCC 29082 / PCC 7421), this protein is Gamma-glutamyl phosphate reductase.